We begin with the raw amino-acid sequence, 1104 residues long: A disintegrin and metalloproteinase with thrombospondin motifs 10 (1104 aa).

Positions 1–25 (MASACQILRWALALGLGLTFKVTHA) are cleaved as a signal peptide. A propeptide spanning residues 26–233 (FRSQDELLSS…SERGQLGLKR (208 aa)) is cleaved from the precursor. Residues asparagine 90 and asparagine 222 are each glycosylated (N-linked (GlcNAc...) asparagine). One can recognise a Peptidase M12B domain in the interval 239–457 (RYVETLVVAD…GLGLCLNNRP (219 aa)). 11 disulfide bridges follow: cysteine 315/cysteine 376, cysteine 351/cysteine 358, cysteine 370/cysteine 452, cysteine 409/cysteine 436, cysteine 479/cysteine 501, cysteine 490/cysteine 508, cysteine 496/cysteine 531, cysteine 521/cysteine 536, cysteine 559/cysteine 596, cysteine 563/cysteine 601, and cysteine 574/cysteine 586. Residue histidine 392 participates in Zn(2+) binding. The active site involves glutamate 393. Zn(2+)-binding residues include histidine 396 and histidine 402. Residues 460–546 (QDFVYPTVAP…VPFGSRPEGV (87 aa)) enclose the Disintegrin domain. A TSP type-1 1 domain is found at 547–602 (DGAWGPWTPWGDCSRSCGGGVSSSSRHCDSPRPTIGGKYCLGERRRHRSCNTNDCP). Residues 706–818 (ETIEGVFSPA…PALHYRFNAP (113 aa)) are spacer. 2 N-linked (GlcNAc...) asparagine glycosylation sites follow: asparagine 740 and asparagine 795. TSP type-1 domains follow at residues 825–885 (PPYS…EPCP), 888–943 (WVVG…QGPM), 944–1003 (CPPE…RRCP), and 1004–1058 (PARW…AKCD). 3 disulfide bridges follow: cysteine 837–cysteine 879, cysteine 841–cysteine 884, and cysteine 852–cysteine 866. N-linked (GlcNAc...) asparagine glycosylation is present at asparagine 892. Residues 1066 to 1104 (GPEECKDVNKVAYCPLVLKFQFCSRAYFRQMCCKTCQGR) form the PLAC domain.

As to quaternary structure, interacts with FBN1; this interaction promotes microfibrils assembly. Zn(2+) is required as a cofactor. Glycosylated. Can be O-fucosylated by POFUT2 on a serine or a threonine residue found within the consensus sequence C1-X(2)-(S/T)-C2-G of the TSP type-1 repeat domains where C1 and C2 are the first and second cysteine residue of the repeat, respectively. Fucosylated repeats can then be further glycosylated by the addition of a beta-1,3-glucose residue by the glucosyltransferase, B3GALTL. Fucosylation mediates the efficient secretion of ADAMTS family members. Can also be C-glycosylated with one or two mannose molecules on tryptophan residues within the consensus sequence W-X-X-W of the TPRs, and N-glycosylated. These other glycosylations can also facilitate secretion. Widely expressed in adult tissues.

It is found in the secreted. The protein localises to the extracellular space. Its subcellular location is the extracellular matrix. In terms of biological role, metalloprotease that participate in microfibrils assembly. Microfibrils are extracellular matrix components occurring independently or along with elastin in the formation of elastic tissues. This is A disintegrin and metalloproteinase with thrombospondin motifs 10 (Adamts10) from Mus musculus (Mouse).